We begin with the raw amino-acid sequence, 251 residues long: Fibroblast growth factor 23 (251 aa).

The signal sequence occupies residues 1–24 (MLGACLRLLVGALCTVCSLGTARA). A disulfide bond links Cys95 and Cys113. Thr171 and Thr178 each carry an O-linked (GalNAc) threonine glycan. Positions 175–251 (RRHTRSAEDP…DRCRPFPRFV (77 aa)) are disordered. Residues 179–189 (RSAEDPPERDP) are compositionally biased toward basic and acidic residues. Ser180 carries the post-translational modification Phosphoserine; by FAM20C.

Belongs to the heparin-binding growth factors family. As to quaternary structure, interacts with FGFR1, FGFR2, FGFR3 and FGFR4. Affinity between fibroblast growth factors (FGFs) and their receptors is increased by KL and heparan sulfate glycosaminoglycans that function as coreceptors. Following secretion this protein is inactivated by cleavage into a N-terminal fragment and a C-terminal fragment. The processing is effected by proprotein convertases. Post-translationally, O-glycosylated at Thr-171 and Thr-178 by GALNT3 and glycosylation of Thr-178 requires previous glycosylation at Thr171. Glycosylation is necessary for secretion; it blocks processing by proprotein convertases when the O-glycan is alpha 2,6-sialylated. Competition between proprotein convertase cleavage and block of cleavage by O-glycosylation determines the level of secreted active FGF23. In terms of processing, phosphorylation at Ser-180 mediated by FAM20C slows down glycosylation at Thr-178 notably. Expressed in the parathyroid.

The protein resides in the secreted. Its function is as follows. Regulator of phosphate homeostasis. Inhibits renal tubular phosphate transport by reducing SLC34A1 levels. Regulator of vitamin-D metabolism. Negatively regulates osteoblasts differentiation and matrix mineralization. Acts directly on the parathyroid to decrease PTH secretion. Up-regulates EGR1 expression in the presence of KL. The sequence is that of Fibroblast growth factor 23 (Fgf23) from Rattus norvegicus (Rat).